The chain runs to 839 residues: DNA gyrase subunit A (839 aa).

The Topo IIA-type catalytic domain occupies 46–510 (LPDARDGLKP…ISEDIDDEDL (465 aa)). Tyrosine 134 (O-(5'-phospho-DNA)-tyrosine intermediate) is an active-site residue. The GyrA-box signature appears at 537-543 (QHRGGVG).

Belongs to the type II topoisomerase GyrA/ParC subunit family. Heterotetramer, composed of two GyrA and two GyrB chains. In the heterotetramer, GyrA contains the active site tyrosine that forms a transient covalent intermediate with DNA, while GyrB binds cofactors and catalyzes ATP hydrolysis.

It localises to the cytoplasm. It catalyses the reaction ATP-dependent breakage, passage and rejoining of double-stranded DNA.. Functionally, a type II topoisomerase that negatively supercoils closed circular double-stranded (ds) DNA in an ATP-dependent manner to modulate DNA topology and maintain chromosomes in an underwound state. Negative supercoiling favors strand separation, and DNA replication, transcription, recombination and repair, all of which involve strand separation. Also able to catalyze the interconversion of other topological isomers of dsDNA rings, including catenanes and knotted rings. Type II topoisomerases break and join 2 DNA strands simultaneously in an ATP-dependent manner. In Mycoplasma pneumoniae (strain ATCC 29342 / M129 / Subtype 1) (Mycoplasmoides pneumoniae), this protein is DNA gyrase subunit A.